Consider the following 235-residue polypeptide: Small heat shock protein, chloroplastic (235 aa).

2 disordered regions span residues 1–23 and 51–80; these read MAYTSLTSSPLVSNVSVGGTSKI and TGDNKDTSVDVHHSSAQGGNNQGTAVERRP. The segment covering 52–63 has biased composition (basic and acidic residues); sequence GDNKDTSVDVHH. Positions 64-74 are enriched in polar residues; sequence SSAQGGNNQGT. Residues 126–235 form the sHSP domain; it reads SGTGEIRTPW…EKKVIDVQIN (110 aa).

It belongs to the small heat shock protein (HSP20) family. As to expression, in fruits, flowers, leaves, and stems.

The protein resides in the plastid. Its subcellular location is the chloroplast. The polypeptide is Small heat shock protein, chloroplastic (HSP21) (Solanum lycopersicum (Tomato)).